We begin with the raw amino-acid sequence, 331 residues long: Cathepsin 7 (331 aa).

The signal sequence occupies residues 1–17; the sequence is MTVAVFLAILCLRAALA. The propeptide at 18-111 is activation peptide; that stretch reads APRPDYSLDA…GKHIQKRNVK (94 aa). The Nuclear localization signal motif lies at 33 to 50; that stretch reads KRNNAKTYSPEEEKQRRA. Asn-72 is a glycosylation site (N-linked (GlcNAc...) asparagine). Intrachain disulfides connect Cys-133-Cys-176, Cys-167-Cys-209, and Cys-267-Cys-320. Cys-136 is a catalytic residue. Active-site residues include His-274 and Asn-298.

Belongs to the peptidase C1 family.

The protein localises to the endosome. It localises to the lysosome. It is found in the cytoplasm. Its subcellular location is the perinuclear region. The protein resides in the golgi apparatus. The protein localises to the nucleus. It localises to the secreted. It is found in the extracellular space. Functionally, involved in trophoblast cell proliferation and differentiation probably by affecting mitotic cell cycle progression. Proteolytic activity and nuclear localization are essential for its role in cell cycle progression. In Rattus norvegicus (Rat), this protein is Cathepsin 7 (Cts7).